A 297-amino-acid chain; its full sequence is tRNA (guanine-N(7)-)-methyltransferase (297 aa).

Residues Gly101, 124 to 125, 171 to 172, and Cys191 contribute to the S-adenosyl-L-methionine site; these read EI and NT. The active site involves Asp194. 270 to 272 is a binding site for S-adenosyl-L-methionine; the sequence is TEE.

The protein belongs to the class I-like SAM-binding methyltransferase superfamily. TrmB family. Forms a complex with trm82.

The protein resides in the nucleus. The catalysed reaction is guanosine(46) in tRNA + S-adenosyl-L-methionine = N(7)-methylguanosine(46) in tRNA + S-adenosyl-L-homocysteine. It participates in tRNA modification; N(7)-methylguanine-tRNA biosynthesis. In terms of biological role, catalyzes the formation of N(7)-methylguanine at position 46 (m7G46) in tRNA. The sequence is that of tRNA (guanine-N(7)-)-methyltransferase (trm8) from Aspergillus niger (strain ATCC MYA-4892 / CBS 513.88 / FGSC A1513).